Consider the following 260-residue polypeptide: Caveolae-associated protein 3 (260 aa).

The tract at residues 1–84 is interaction with CAVIN1; sequence MGESALESGP…SNTLAQLLAK (84 aa). The interval 20 to 78 is leucine-zipper; it reads VHAVTVVTLLEKLATMLETLRERQGGLAQRQGGLAGSVRRIQSNLGALSRSHDTTSNTL. Ser62 and Ser70 each carry phosphoserine. Lys128 is covalently cross-linked (Glycyl lysine isopeptide (Lys-Gly) (interchain with G-Cter in SUMO2)). Positions 135–201 are interaction with CAV1; sequence AKAFQKAPEP…SGRKGHAAPT (67 aa). A disordered region spans residues 140 to 260; that stretch reads KAPEPLGPVE…AAVLQVESAA (121 aa). Residues 157-168 are compositionally biased toward acidic residues; that stretch reads AEAEESSDEEEP. Phosphoserine is present on residues Ser162, Ser163, and Ser171. Over residues 201–210 the composition is skewed to pro residues; that stretch reads TPTPVKPPRL.

It belongs to the CAVIN family. In terms of assembly, component of the CAVIN complex composed of CAVIN1, CAVIN2, CAVIN3 and CAVIN4. Interacts with PRKCD and with phosphatidylserine. Phosphatidylserine may form a bridge between PKC and PKC-binding partners and stabilize the binding. Interacts with PER2. Interacts with CAVIN1 and EPS15L1. Interacts (via leucine-zipper domain) with CAV1 in a cholesterol-sensitive manner. Post-translationally, in vitro, phosphorylated by PRKCD.

The protein localises to the cytoplasm. It is found in the membrane. Its subcellular location is the caveola. It localises to the cytosol. In terms of biological role, regulates the traffic and/or budding of caveolae. Plays a role in caveola formation in a tissue-specific manner. Required for the formation of caveolae in smooth muscle but not in the lung and heart endothelial cells. Regulates the equilibrium between cell surface-associated and cell surface-dissociated caveolae by promoting the rapid release of caveolae from the cell surface. Plays a role in the regulation of the circadian clock. Modulates the period length and phase of circadian gene expression and also regulates expression and interaction of the core clock components PER1/2 and CRY1/2. In Bos taurus (Bovine), this protein is Caveolae-associated protein 3 (CAVIN3).